A 1181-amino-acid polypeptide reads, in one-letter code: HEAT repeat-containing protein 6 (1181 aa).

The stretch at 159 to 198 is one HEAT 1 repeat; it reads PELLGNTGLLMKLSDLAQSDPEVRRAAVHCMANLCLSVPG. 2 disordered regions span residues 292-347 and 371-390; these read QYDG…PVTG and LDGS…SSSS. Positions 300 to 312 are enriched in polar residues; that stretch reads KPQQSESSASRPT. The span at 313 to 325 shows a compositional bias: basic residues; it reads LNKKKKSKVKPKK. Residues Ser336 and Ser337 each carry the phosphoserine modification. A phosphoserine mark is found at Ser399 and Ser402. HEAT repeat units lie at residues 452-490, 515-552, and 558-595; these read ELGS…GSKQ, SIRE…NAPY, and SLLT…THAP. The tract at residues 613 to 646 is disordered; that stretch reads NSNSATPHLSPPDWWKKAPAGPSLEETSVSSPKG. The residue at position 618 (Thr618) is a Phosphothreonine. The span at 637–646 shows a compositional bias: polar residues; sequence EETSVSSPKG. Phosphoserine is present on Ser643.

In terms of tissue distribution, amplified in breast cancer cell lines MCF-7 and BT-474.

Its function is as follows. Amplification-dependent oncogene. The protein is HEAT repeat-containing protein 6 (HEATR6) of Homo sapiens (Human).